The following is a 463-amino-acid chain: Interleukin enhancer-binding factor 2 (463 aa).

The residue at position 94 (R94) is an Asymmetric dimethylarginine; alternate. The residue at position 94 (R94) is an Omega-N-methylarginine; alternate. In terms of domain architecture, DZF spans 108 to 444 (RHILAYDWLA…PEKKEGEEEE (337 aa)). Position 145 is an omega-N-methylarginine (R145). Residue K166 forms a Glycyl lysine isopeptide (Lys-Gly) (interchain with G-Cter in ubiquitin) linkage. Residues S173 and S189 each carry the phosphoserine modification. Glycyl lysine isopeptide (Lys-Gly) (interchain with G-Cter in SUMO2) cross-links involve residues K259 and K437. The interval 424–463 (VTPSEKAYEKPPEKKEGEEEEENTEEPPQGEEEESMETQE) is disordered. Positions 429–440 (KAYEKPPEKKEG) are enriched in basic and acidic residues. The span at 441–463 (EEEEENTEEPPQGEEEESMETQE) shows a compositional bias: acidic residues. T461 carries the post-translational modification Phosphothreonine.

Forms heterodimers with ILF3. ILF2-ILF3 heterodimers may also bind to PRKDC/XRCC7: this may stabilize the interaction of PRKDC/XRCC7 and the heterodimeric complex of G22P1/KU70 and XRCC5/KU80. Forms a complex with ILF3, YLPM1, KHDRBS1, RBMX, NCOA5 and PPP1CA. Identified in a IGF2BP1-dependent mRNP granule complex containing untranslated mRNAs. Interacts with IGF2BP1. Interacts with CRBN; this interaction promotes ubiquitination and subsequent degradation of ILF2. Post-translationally, ubiquitinated at Lys-166 by CRBN with polyubiquitin chains by the CUL4-RING E3 ligase (CRL4-CRBN) and then degraded by the proteasome.

It localises to the nucleus. The protein localises to the nucleolus. It is found in the cytoplasm. Chromatin-interacting protein that forms a stable heterodimer with interleukin enhancer-binding factor 3/ILF3 and plays a role in several biological processes including transcription, innate immunity or cell growth. Essential for the efficient reshuttling of ILF3 (isoform 1 and isoform 2) into the nucleus. Together with ILF3, forms an RNA-binding complex that is required for mitotic progression and cytokinesis by regulating the expression of a cluster of mitotic genes. Mechanistically, competes with STAU1/STAU2-mediated mRNA decay. Plays also a role in the inhibition of various viruses including Japanese encephalitis virus or enterovirus 71. In Rattus norvegicus (Rat), this protein is Interleukin enhancer-binding factor 2 (Ilf2).